A 61-amino-acid chain; its full sequence is Large ribosomal subunit protein bL32 (61 aa).

A compositionally biased stretch (basic residues) spans 1-16 (MPTPKKKTSRSKRDMR). Residues 1–47 (MPTPKKKTSRSKRDMRRSHDGLTAPAIAVEKKTGELVRPHRAHKGAD) are disordered. Residues 29-38 (VEKKTGELVR) are compositionally biased toward basic and acidic residues.

Belongs to the bacterial ribosomal protein bL32 family.

The chain is Large ribosomal subunit protein bL32 from Bdellovibrio bacteriovorus (strain ATCC 15356 / DSM 50701 / NCIMB 9529 / HD100).